The following is a 761-amino-acid chain: RNA-binding protein 12B (761 aa).

Phosphoserine is present on residues Ser-98, Ser-101, and Ser-112. Lys-114 is covalently cross-linked (Glycyl lysine isopeptide (Lys-Gly) (interchain with G-Cter in SUMO2)). The interval 120–147 is disordered; sequence SGYGSSINQDAGFHSNGTGHGNLRPRKT. Lys-151 participates in a covalent cross-link: Glycyl lysine isopeptide (Lys-Gly) (interchain with G-Cter in SUMO2). One can recognise an RRM 1 domain in the interval 155-230; sequence PYLFLRGLPY…RFIEVMQGSE (76 aa). Over residues 247–262 the composition is skewed to basic and acidic residues; sequence LRRSEEHSPPRGINDR. The disordered stretch occupies residues 247 to 278; sequence LRRSEEHSPPRGINDRHFRKRSHSKSPRRTRS. Phosphoserine occurs at positions 250 and 254. Residues 263-278 are compositionally biased toward basic residues; it reads HFRKRSHSKSPRRTRS. Thr-276 is subject to Phosphothreonine. Residues Ser-278, Ser-280, Ser-292, and Ser-294 each carry the phosphoserine modification. An RRM 2 domain is found at 284-360; it reads FYVHLKNLSL…RPVHIDPISR (77 aa). Lys-319 is subject to N6-acetyllysine. Residue Lys-335 forms a Glycyl lysine isopeptide (Lys-Gly) (interchain with G-Cter in SUMO2) linkage. Positions 372–384 are enriched in basic and acidic residues; sequence KKRSGSPERDRPG. The interval 372–392 is disordered; sequence KKRSGSPERDRPGHVSQKYSQ. A Phosphoserine modification is found at Ser-377. An RRM 3 domain is found at 400 to 477; the sequence is LCIYIRNFPF…TEVLLRLISE (78 aa). Glycyl lysine isopeptide (Lys-Gly) (interchain with G-Cter in SUMO2) cross-links involve residues Lys-514 and Lys-541. Residues 538 to 621 show a composition bias toward basic and acidic residues; that stretch reads DNFKHPQRDF…RHPREEDWRR (84 aa). The tract at residues 538-690 is disordered; it reads DNFKHPQRDF…THQMKTSGAL (153 aa). A phosphoserine mark is found at Ser-575 and Ser-591. Residues 627–654 are compositionally biased toward polar residues; it reads LQSTSGGHPQSISGGHPQSISGARPRST. Positions 661-672 are enriched in low complexity; the sequence is SISGGRLRSISG.

This Pongo abelii (Sumatran orangutan) protein is RNA-binding protein 12B (RBM12B).